A 211-amino-acid chain; its full sequence is Thiamine-phosphate synthase (211 aa).

4-amino-2-methyl-5-(diphosphooxymethyl)pyrimidine is bound by residues Gln-37–Lys-41 and Asn-69. Residues Asp-70 and Asp-89 each contribute to the Mg(2+) site. Position 108 (Ser-108) interacts with 4-amino-2-methyl-5-(diphosphooxymethyl)pyrimidine. Residue Thr-134–Thr-136 coordinates 2-[(2R,5Z)-2-carboxy-4-methylthiazol-5(2H)-ylidene]ethyl phosphate. Lys-137 is a binding site for 4-amino-2-methyl-5-(diphosphooxymethyl)pyrimidine. 2-[(2R,5Z)-2-carboxy-4-methylthiazol-5(2H)-ylidene]ethyl phosphate is bound by residues Gly-166 and Val-186–Ser-187.

This sequence belongs to the thiamine-phosphate synthase family. It depends on Mg(2+) as a cofactor.

The enzyme catalyses 2-[(2R,5Z)-2-carboxy-4-methylthiazol-5(2H)-ylidene]ethyl phosphate + 4-amino-2-methyl-5-(diphosphooxymethyl)pyrimidine + 2 H(+) = thiamine phosphate + CO2 + diphosphate. It catalyses the reaction 2-(2-carboxy-4-methylthiazol-5-yl)ethyl phosphate + 4-amino-2-methyl-5-(diphosphooxymethyl)pyrimidine + 2 H(+) = thiamine phosphate + CO2 + diphosphate. The catalysed reaction is 4-methyl-5-(2-phosphooxyethyl)-thiazole + 4-amino-2-methyl-5-(diphosphooxymethyl)pyrimidine + H(+) = thiamine phosphate + diphosphate. It participates in cofactor biosynthesis; thiamine diphosphate biosynthesis; thiamine phosphate from 4-amino-2-methyl-5-diphosphomethylpyrimidine and 4-methyl-5-(2-phosphoethyl)-thiazole: step 1/1. In terms of biological role, condenses 4-methyl-5-(beta-hydroxyethyl)thiazole monophosphate (THZ-P) and 2-methyl-4-amino-5-hydroxymethyl pyrimidine pyrophosphate (HMP-PP) to form thiamine monophosphate (TMP). This chain is Thiamine-phosphate synthase, found in Escherichia coli O6:H1 (strain CFT073 / ATCC 700928 / UPEC).